Consider the following 307-residue polypeptide: UDP-N-acetylenolpyruvoylglucosamine reductase (307 aa).

In terms of domain architecture, FAD-binding PCMH-type spans 33–197 (TGGNADFYIT…LEAAFTLAPG (165 aa)). Arginine 176 is a catalytic residue. Serine 226 acts as the Proton donor in catalysis. The active site involves glutamate 296.

This sequence belongs to the MurB family. The cofactor is FAD.

It is found in the cytoplasm. The catalysed reaction is UDP-N-acetyl-alpha-D-muramate + NADP(+) = UDP-N-acetyl-3-O-(1-carboxyvinyl)-alpha-D-glucosamine + NADPH + H(+). It participates in cell wall biogenesis; peptidoglycan biosynthesis. Cell wall formation. In Staphylococcus aureus (strain MRSA252), this protein is UDP-N-acetylenolpyruvoylglucosamine reductase.